The chain runs to 476 residues: Doublesex and mab-3 related transcription factor 3 (476 aa).

A DNA-binding region (DM) is located at residues 29-76; the sequence is CARCRNHGVLSWLKGHKRYCRFKDCTCEKCILIIERQRVMAAQVALRR. 2 disordered regions span residues 89–130 and 147–195; these read DSLR…RPAT and GTLP…SKNC. Residues 102–121 show a composition bias toward low complexity; the sequence is DAAATAATASQSSPASQASQ. A compositionally biased stretch (basic and acidic residues) spans 176–185; sequence FSDKDTDQRS. The DMA domain maps to 255–290; the sequence is RPPLEVLKKIFPNQKPTVLELILKGCGGDLVSAVEV. Positions 418 to 432 are enriched in polar residues; sequence NSTSVFRSSPVLSSR. A disordered region spans residues 418-476; the sequence is NSTSVFRSSPVLSSRTTEDPRISIPDDGCPIVAKQSIYTEDDYDERSDSSDSRILNTSS.

Belongs to the DMRT family.

It localises to the nucleus. Its function is as follows. Probable transcription factor that plays a role in configuring the spinal circuits controlling stride in vertebrates. Involved in neuronal specification within a specific subdivision of spinal cord neurons and in the development of a coordinated locomotor network controlling limb movements. May regulate transcription during sexual development. The sequence is that of Doublesex and mab-3 related transcription factor 3 (Dmrt3) from Rattus norvegicus (Rat).